Consider the following 113-residue polypeptide: Hydrogenase maturation factor HypA (113 aa).

Residue His-2 participates in Ni(2+) binding. Residues Cys-73, Cys-76, Cys-89, and Cys-92 each contribute to the Zn(2+) site.

It belongs to the HypA/HybF family.

Its function is as follows. Involved in the maturation of [NiFe] hydrogenases. Required for nickel insertion into the metal center of the hydrogenase. In Aeromonas salmonicida (strain A449), this protein is Hydrogenase maturation factor HypA.